The following is a 384-amino-acid chain: S-adenosylmethionine synthase (384 aa).

An ATP-binding site is contributed by His-15. Asp-17 is a binding site for Mg(2+). Position 43 (Glu-43) interacts with K(+). The L-methionine site is built by Glu-56 and Gln-99. Residues 99–109 (QSPDINQGVDR) form a flexible loop region. Residues 164–166 (DAK), 230–231 (RF), Asp-239, 245–246 (RK), Ala-262, and Lys-266 each bind ATP. L-methionine is bound at residue Asp-239. L-methionine is bound at residue Lys-270.

The protein belongs to the AdoMet synthase family. In terms of assembly, homotetramer; dimer of dimers. Mg(2+) serves as cofactor. Requires K(+) as cofactor.

Its subcellular location is the cytoplasm. It catalyses the reaction L-methionine + ATP + H2O = S-adenosyl-L-methionine + phosphate + diphosphate. Its pathway is amino-acid biosynthesis; S-adenosyl-L-methionine biosynthesis; S-adenosyl-L-methionine from L-methionine: step 1/1. Its function is as follows. Catalyzes the formation of S-adenosylmethionine (AdoMet) from methionine and ATP. The overall synthetic reaction is composed of two sequential steps, AdoMet formation and the subsequent tripolyphosphate hydrolysis which occurs prior to release of AdoMet from the enzyme. The protein is S-adenosylmethionine synthase of Escherichia fergusonii (strain ATCC 35469 / DSM 13698 / CCUG 18766 / IAM 14443 / JCM 21226 / LMG 7866 / NBRC 102419 / NCTC 12128 / CDC 0568-73).